Reading from the N-terminus, the 142-residue chain is Hemoglobin subunit pi (142 aa).

In terms of domain architecture, Globin spans 2–142 (ALTQAEKAAV…ISSVLTEKYR (141 aa)). Heme b-binding residues include His59 and His88.

The protein belongs to the globin family.

In terms of biological role, the pi' chain is the counterpart of the alpha chain in the major early embryonic hemoglobin P. The protein is Hemoglobin subunit pi of Gallus gallus (Chicken).